Consider the following 145-residue polypeptide: UPF0299 membrane protein plu1549 (145 aa).

The next 4 membrane-spanning stretches (helical) occupy residues 6-26, 34-54, 65-85, and 95-115; these read VLIVGWQYLRAFVLIYLCLLT, LPIIIPGSIIGMLILFVLLAF, GCSLLLKNMTLLFLPIGVGVM, and IIPIVFSCLISTAIVMIIVAY.

The protein belongs to the UPF0299 family.

It localises to the cell inner membrane. The protein is UPF0299 membrane protein plu1549 of Photorhabdus laumondii subsp. laumondii (strain DSM 15139 / CIP 105565 / TT01) (Photorhabdus luminescens subsp. laumondii).